The sequence spans 82 residues: Exodeoxyribonuclease 7 small subunit (82 aa).

Belongs to the XseB family. Heterooligomer composed of large and small subunits.

Its subcellular location is the cytoplasm. The catalysed reaction is Exonucleolytic cleavage in either 5'- to 3'- or 3'- to 5'-direction to yield nucleoside 5'-phosphates.. Functionally, bidirectionally degrades single-stranded DNA into large acid-insoluble oligonucleotides, which are then degraded further into small acid-soluble oligonucleotides. The chain is Exodeoxyribonuclease 7 small subunit from Mycobacterium marinum (strain ATCC BAA-535 / M).